The sequence spans 391 residues: Homocysteine-responsive endoplasmic reticulum-resident ubiquitin-like domain member 1 protein (391 aa).

N-acetylmethionine is present on M1. Residues M1–D263 are Cytoplasmic-facing. Positions V10–L72 constitute a Ubiquitin-like domain. The disordered stretch occupies residues N90–R126. Polar residues predominate over residues P95–G124. An interaction with UBQLN1 region spans residues Q115–S200. A Phosphoserine modification is found at S135. Residues W264 to Y284 form a helical membrane-spanning segment. Over S285–R289 the chain is Lumenal. A helical transmembrane segment spans residues F290–F310. The Cytoplasmic portion of the chain corresponds to R311 to N391. The tract at residues N317–H361 is disordered. The segment covering D346 to H361 has biased composition (basic and acidic residues).

As to quaternary structure, interacts with PSEN1 and PSEN2. Interacts with UBXN6. Interacts with UBQLN1, UBQLN2 and UBQLN4. Component of the HRD1 complex, which comprises at least SYNV1/HRD1, FAM8A1, HERPUD1/HERP, OS9, SEL1L and UBE2J1. FAM8A1 binding to SYNV1 may promote recruitment of HERPUD1 to the HRD1 complex.

It is found in the endoplasmic reticulum membrane. Its function is as follows. Component of the endoplasmic reticulum quality control (ERQC) system also called ER-associated degradation (ERAD) involved in ubiquitin-dependent degradation of misfolded endoplasmic reticulum proteins. Binds to ubiquilins and this interaction is required for efficient degradation of CD3D via the ERAD pathway. This chain is Homocysteine-responsive endoplasmic reticulum-resident ubiquitin-like domain member 1 protein (Herpud1), found in Mus musculus (Mouse).